Here is a 146-residue protein sequence, read N- to C-terminus: NADH-ubiquinone oxidoreductase chain 6 (146 aa).

The next 4 membrane-spanning stretches (helical) occupy residues 10 to 30, 43 to 63, 81 to 101, and 124 to 144; these read ILAIGLLSPVQSILALILLFV, LMGILYILVYVGAIAILFLFI, VIVLILIPLIPLDIAFEPIAI, and APMLVIIGIILIVSVIGAIAM.

It belongs to the complex I subunit 6 family.

It localises to the mitochondrion membrane. It carries out the reaction a ubiquinone + NADH + 5 H(+)(in) = a ubiquinol + NAD(+) + 4 H(+)(out). Functionally, core subunit of the mitochondrial membrane respiratory chain NADH dehydrogenase (Complex I) that is believed to belong to the minimal assembly required for catalysis. Complex I functions in the transfer of electrons from NADH to the respiratory chain. The immediate electron acceptor for the enzyme is believed to be ubiquinone. The protein is NADH-ubiquinone oxidoreductase chain 6 (NAD6) of Candida albicans (strain SC5314 / ATCC MYA-2876) (Yeast).